The primary structure comprises 353 residues: MFEGFGPNKKRKISKLAAEQSLAQQPWVEKYRPKNLDEVTAQDHAVTVLKKTLKSANLPHMLFYGPPGTGKTSTILALTKELYGPDLMKSRILELNASDERGISIVREKVKNFARLTVSKPSKHDLENYPCPPYKIIILDEADSMTADAQSALRRTMETYSGVTRFCLICNYVTRIIDPLASRCSKFRFKALDASNAIDRLRFISEQENVKCDDGVLERILDISAGDLRRGITLLQSASKGAQYLGDGKNITSTQVEELAGVVPHDILIEIVEKVKSGDFDEIKKYVNTFMKSGWSAASVVNQLHEYYITNDNFDTNFKNQISWLLFTTDSRLNNGTNEHIQLLNLLVKISQL.

The residue at position 1 (Met-1) is an N-acetylmethionine. ATP contacts are provided by residues Val-28, Arg-32, 65–73, Asn-171, and Arg-229; that span reads GPPGTGKTS.

It belongs to the activator 1 small subunits family. In terms of assembly, replication factor C (RFC) is a heteropentamer of subunits RFC1, RFC2, RFC3, RFC4 and RFC5 and forms a complex with POL30/PCNA in the presence of ATP. Component of the RAD24-RFC complex which consists of RAD14, RFC2, RFC3, RFC4 and RFC5 and associates with the checkpoint clamp DDC1:MEC3:RAD17 complex. Component of the ELG1-RFC complex which consists of ELG1, RFC2, RFC3, RFC4 and RFC5. Component of the CTF18-RFC complex, which consists of CTF18, CTF8, DCC1, RFC2, RFC3, RFC4 and RFC5. RFC2 interacts with ECO1.

The protein resides in the nucleus. Functionally, component of ATP-dependent clamp loader (RFC and RFC-like) complexes for DNA clamps, such as the POL30/PCNA homotrimer and the checkpoint clamp DDC1:MEC3:RAD17 complex. During a clamp loading circle, the RFC:clamp complex binds to DNA and the recognition of the double-stranded/single-stranded junction stimulates ATP hydrolysis by RFC. The complex presumably provides bipartite ATP sites in which one subunit supplies a catalytic site for hydrolysis of ATP bound to the neighboring subunit. Dissociation of RFC from the clamp leaves the clamp encircling DNA. Component of the replication factor C (RFC or activator 1) complex which loads POL30/PCNA and acts during elongation of primed DNA templates by DNA polymerase delta and epsilon. RFC has an essential but redundant activity in sister chromatid cohesion establishment. Component of the RFC-like complex CTF18-RFC which is required for efficient establishment of chromosome cohesion during S-phase and may load or unload POL30/PCNA. Component of the RFC-like RAD24-RFC complex which loads the checkpoint clamp DDC1:MEC3:RAD17 complex and is involved in DNA repair pathways. Component of the RFC-like ELG1-RFC complex which appears to have a role in DNA replication, replication fork re-start, recombination and repair. RFC2 binds ATP and single-stranded DNA. The sequence is that of Replication factor C subunit 2 (RFC2) from Saccharomyces cerevisiae (strain ATCC 204508 / S288c) (Baker's yeast).